The sequence spans 264 residues: Undecaprenyl-diphosphatase (264 aa).

8 helical membrane passes run 7-27, 39-59, 89-109, 112-132, 145-165, 182-202, 212-232, and 244-264; these read VVILGFIQGIAEFLPISSSGH, LPIVFDIYLHLATVLVVMIYY, ILLILIITIITAFIGIFIEMF, LFTLNLVLINFIVTSILLFLL, ILLAGCLIGTMQGIGAMPGIS, SESFEISFLSLIPIVFGSLLL, MLFSIFEINLGAIIAFLVGLF, and SKLYYFSVYLIILVSLVYFLF.

It belongs to the UppP family.

Its subcellular location is the cell inner membrane. The catalysed reaction is di-trans,octa-cis-undecaprenyl diphosphate + H2O = di-trans,octa-cis-undecaprenyl phosphate + phosphate + H(+). Functionally, catalyzes the dephosphorylation of undecaprenyl diphosphate (UPP). Confers resistance to bacitracin. The sequence is that of Undecaprenyl-diphosphatase from Borrelia hermsii (strain HS1 / DAH).